Reading from the N-terminus, the 312-residue chain is Ribosomal RNA small subunit methyltransferase H (312 aa).

S-adenosyl-L-methionine-binding positions include G35 to H37, D55, F79, D101, and Q108. The segment at L286 to V306 is disordered. A compositionally biased stretch (basic and acidic residues) spans K287–R298.

It belongs to the methyltransferase superfamily. RsmH family.

The protein resides in the cytoplasm. The catalysed reaction is cytidine(1402) in 16S rRNA + S-adenosyl-L-methionine = N(4)-methylcytidine(1402) in 16S rRNA + S-adenosyl-L-homocysteine + H(+). In terms of biological role, specifically methylates the N4 position of cytidine in position 1402 (C1402) of 16S rRNA. The protein is Ribosomal RNA small subunit methyltransferase H of Aeromonas hydrophila subsp. hydrophila (strain ATCC 7966 / DSM 30187 / BCRC 13018 / CCUG 14551 / JCM 1027 / KCTC 2358 / NCIMB 9240 / NCTC 8049).